The following is a 158-amino-acid chain: MKTFLILAMAVALAKAQSTDEITNLVQFGKLVMCLGNIGYTEGLEYDGYGCFCGKGGKGTPVDATDRCCEVHDNCYGQAVEEGKCWSVETYGTTYWYDQSTSGSCSIRCWEEGDYNSLVPRKACKAAICECDRKAAQCFADNRPTFNRKYLNYAKDTC.

Residues 1–16 (MKTFLILAMAVALAKA) form the signal peptide. Positions 17 to 23 (QSTDEIT) are excised as a propeptide. Disulfide bonds link Cys-51/Cys-158, Cys-53/Cys-69, Cys-68/Cys-138, Cys-75/Cys-131, Cys-85/Cys-124, and Cys-109/Cys-129. Ca(2+)-binding residues include Gly-54 and Gly-56. His-72 is a catalytic residue. Asp-73 is a Ca(2+) binding site. Residue Asp-132 is part of the active site.

This sequence belongs to the phospholipase A2 family. Group I subfamily. Monomer. Requires Ca(2+) as cofactor. Expressed by the venom gland.

The protein resides in the secreted. It catalyses the reaction a 1,2-diacyl-sn-glycero-3-phosphocholine + H2O = a 1-acyl-sn-glycero-3-phosphocholine + a fatty acid + H(+). Its function is as follows. Starfish phospholipase A2 (PLA2) that has hemorrhagic and capillary permeability-increasing activities and hence is considered to be deeply involved in the local inflammation. Shows hemolytic activity only in the presence of phosphatidylcholine (PC). PLA2 catalyzes the calcium-dependent hydrolysis of the 2-acyl groups in 3-sn-phosphoglycerides. This is Phospholipase A2 AP-PLA2-II from Acanthaster planci (Crown-of-thorns starfish).